A 3579-amino-acid chain; its full sequence is Protocadherin-like wing polarity protein stan (3579 aa).

The N-terminal stretch at 1–29 (MQTREFPQRPLGLLLVLLVVLLQSSLIKS) is a signal peptide. Residues 30 to 2816 (YLIIVHEDTP…EPSLLVQITS (2787 aa)) are Extracellular-facing. 3 N-linked (GlcNAc...) asparagine glycosylation sites follow: Asn46, Asn179, and Asn340. Cadherin domains lie at 360-464 (EQAL…SPTF), 465-581 (EAEQ…YPQF), 582-689 (SERT…APRF), 690-794 (YTSQ…DPAF), 795-897 (NPKY…APIF), 898-1007 (ENAP…APAF), 1008-1113 (KSPL…PPTF), and 1114-1220 (ASDK…APVL). N-linked (GlcNAc...) asparagine glycosylation is present at Asn671. N-linked (GlcNAc...) asparagine glycosylation is present at Asn886. 3 N-linked (GlcNAc...) asparagine glycosylation sites follow: Asn1269, Asn1374, and Asn1441. Residues 1482–1518 (EVDLCYSDPCQNGGTCVRREGGYTCVCPSTHTGQNCE) enclose the EGF-like 1; calcium-binding domain. Intrachain disulfides connect Cys1486–Cys1497, Cys1491–Cys1506, and Cys1508–Cys1517. The 198-residue stretch at 1556–1753 (LRARAFGRNS…VADNGTLAGC (198 aa)) folds into the Laminin G-like 1 domain. Residues Asn1650, Asn1678, and Asn1747 are each glycosylated (N-linked (GlcNAc...) asparagine). Intrachain disulfides connect Cys1727–Cys1753, Cys1760–Cys1771, Cys1765–Cys1780, and Cys1782–Cys1791. The EGF-like 2; calcium-binding domain maps to 1756–1792 (KAPLCQSEPCFNGGTCREGWGTYSCECPEGYAGNSCQ). The 168-residue stretch at 1796–1963 (PAPWRFSGDG…TIRENVEDGC (168 aa)) folds into the Laminin G-like 2 domain. A glycan (N-linked (GlcNAc...) asparagine) is linked at Asn1843. 4 disulfide bridges follow: Cys1937–Cys1963, Cys1969–Cys1979, Cys1973–Cys1988, and Cys1990–Cys1999. The 36-residue stretch at 1965–2000 (SRAQCPDHCPNHSSCQSSWDLSTCECDSGYVGTDCA) folds into the EGF-like 3; calcium-binding domain. N-linked (GlcNAc...) asparagine glycosylation occurs at Asn1975. 4 N-linked (GlcNAc...) asparagine glycosylation sites follow: Asn2016, Asn2028, Asn2071, and Asn2088. Intrachain disulfides connect Cys2092–Cys2095, Cys2097–Cys2114, Cys2116–Cys2125, and Cys2128–Cys2140. Residues 2095–2142 (CDCYSIGSFSGACNPLTGQCECREGVIGRRCDSCSNPYAEVTLSGCEV) form the Laminin EGF-like domain. Asn2196 and Asn2320 each carry an N-linked (GlcNAc...) asparagine glycan. Residues 2553–2562 (QETQRLEIPS) are compositionally biased toward basic and acidic residues. 3 disordered regions span residues 2553–2582 (QETQRLEIPSRKIFSSSSPSSSSSSGSTEQ), 2610–2635 (HEIPPPVSSVEQQEASSDEDGEEREP), and 2654–2684 (VISPDSPEMLNPNYEGVSSTGSDEQPKGENE). Positions 2567 to 2579 (SSSSPSSSSSSGS) are enriched in low complexity. Residues 2653-2803 (EVISPDSPEM…AVIVDVIDPE (151 aa)) form the GAIN-B domain. Disulfide bonds link Cys2747/Cys2785 and Cys2762/Cys2787. Positions 2747–2803 (CVRWNSFTNQWTRLGCQTEIPDFDGDFNPAAQQAILVNCSCTHISSYAVIVDVIDPE) are GPS. N-linked (GlcNAc...) asparagine glycosylation occurs at Asn2784. The helical transmembrane segment at 2817–2837 (YSAFLVSLPLLLGVLLALALL) threads the bilayer. At 2838–2845 (RGQQTNSN) the chain is on the cytoplasmic side. Residues 2846-2866 (TIHQNIVLCVFCAELLFFVGM) form a helical membrane-spanning segment. The Extracellular portion of the chain corresponds to 2867–2883 (QSRRQLLESEFPCKLTA). A helical membrane pass occupies residues 2884–2904 (ICLHYFWLAAFAWTTVDCVHL). The Cytoplasmic segment spans residues 2905–2919 (YRMLTEMRDINHGPM). The helical transmembrane segment at 2920-2940 (GFYFAMGYGAPAIVVGLSVGV) threads the bilayer. Topologically, residues 2941 to 2959 (RAHEYGNSLFCWLSVYEPV) are extracellular. Residues 2960 to 2980 (VWWLVGPIAGMSVVNLLILFV) form a helical membrane-spanning segment. The Cytoplasmic portion of the chain corresponds to 2981 to 3000 (SVKAAFTLKDHVLGFGNLRT). Residues 3001–3021 (LLWLSVVSLPLMGVMWVLAVL) form a helical membrane-spanning segment. Residues 3022–3031 (AASEHSQLLS) lie on the Extracellular side of the membrane. A helical transmembrane segment spans residues 3032–3052 (LLLSGVVLLHALFCLIGYCII). The Cytoplasmic segment spans residues 3053 to 3579 (NKRVRENLQR…RNIDDDETTV (527 aa)). Disordered stretches follow at residues 3111–3225 (GISA…TPAY), 3343–3377 (LYGRRGEYPDKYGSYKPPSHYGSEKDYPGGGSGSQ), 3458–3486 (YHQQQQQQQQHHLQDRLSEGSDKNGYHFP), and 3499–3579 (LSHT…ETTV). The segment covering 3113–3128 (SASSTTSRSTAKTSSS) has biased composition (low complexity). The span at 3167–3191 (RGGEEKPSRRQRKDSDSGSETDGRS) shows a compositional bias: basic and acidic residues. 2 positions are modified to phosphoserine: Ser3199 and Ser3200. The segment covering 3208–3223 (ARSSGTHRSTAVSSTP) has biased composition (polar residues). The span at 3343–3352 (LYGRRGEYPD) shows a compositional bias: basic and acidic residues. Over residues 3459–3468 (HQQQQQQQQH) the composition is skewed to low complexity. A compositionally biased stretch (basic and acidic residues) spans 3469-3482 (HLQDRLSEGSDKNG). Residues 3501–3513 (HTQPPSLHGSQLM) are compositionally biased toward polar residues.

This sequence belongs to the G-protein coupled receptor 2 family. In terms of assembly, interacts with ATP6AP2 (via N-terminus). As to expression, in the pupal wing, expressed at relatively even levels in all regions. Abundant in 6-9 hours embryos. Expressed at higher levels in pupae than larvae.

It is found in the cell membrane. The protein localises to the apical cell membrane. Functionally, involved in the fz signaling pathway that controls wing tissue polarity. Also mediates homophilic cell adhesion. May play a role in initiating prehair morphogenesis. May play a critical role in tissue polarity and in formation of normal dendrite fields. During planar cell polarity, stabilizes asymmetric PCP domains together with ATP6AP2. The polypeptide is Protocadherin-like wing polarity protein stan (stan) (Drosophila melanogaster (Fruit fly)).